The sequence spans 359 residues: Alanine racemase (359 aa).

Lys34 serves as the catalytic Proton acceptor; specific for D-alanine. Lys34 carries the N6-(pyridoxal phosphate)lysine modification. Arg129 serves as a coordination point for substrate. Tyr255 functions as the Proton acceptor; specific for L-alanine in the catalytic mechanism. Met303 is a binding site for substrate.

Belongs to the alanine racemase family. Requires pyridoxal 5'-phosphate as cofactor.

The catalysed reaction is L-alanine = D-alanine. Its pathway is amino-acid biosynthesis; D-alanine biosynthesis; D-alanine from L-alanine: step 1/1. Catalyzes the interconversion of L-alanine and D-alanine. May also act on other amino acids. This is Alanine racemase (alr) from Shigella dysenteriae serotype 1 (strain Sd197).